A 462-amino-acid polypeptide reads, in one-letter code: BBSome complex member bbs-4 (462 aa).

A disordered region spans residues 1 to 46 (MEASNQDEIIGTDVIPNEQDNPEEVVPEPTSLDVPPPPPERAPSAP). TPR repeat units lie at residues 89 to 122 (EAAF…SGKN), 124 to 156 (RYFY…MKDN), 199 to 232 (ATLI…QPDN), 234 to 266 (EVMN…DPAN), 268 to 300 (QAIL…SDYN), 335 to 368 (YKIS…YPQN), and 369 to 402 (AKAV…KKNP).

This sequence belongs to the BBS4 family. As to quaternary structure, part of BBSome complex, that contains at least bbs-1, bbs-2, bbs-4, bbs-5, osm-12, bbs-8/ttc-8 and bbs-9. Interacts (via C-terminus) with bbs-5; the interaction is direct.

It is found in the cytoplasm. The protein localises to the cytoskeleton. It localises to the microtubule organizing center. Its subcellular location is the centrosome. The protein resides in the cell projection. It is found in the cilium membrane. Component of the BBSome complex. The BBSome complex is thought to function as a coat complex required for sorting of specific membrane proteins to the primary cilia. The BBSome complex is required for ciliogenesis but is dispensable for centriolar satellite function. Required for proper BBSome complex assembly and its ciliary localization. May be required for microtubule anchoring at the centrosome but not for microtubule nucleation. May be required for the dynein-mediated transport of pericentriolar proteins to the centrosome. Required, redundantly with bbs-5, for cilia biogenesis and both the assembly and movement of intraflagellar transport proteins along the ciliary axoneme. Plays a role in the removal of degraded mechanosensory receptors within the cilia. The sequence is that of BBSome complex member bbs-4 from Caenorhabditis elegans.